Consider the following 268-residue polypeptide: MLHVSMVGCGAIGQGVLELLKSDPDLCFDTVIVPEHGMDRARAAIAPFAPRTRVMTRLPAQADRPDLLVECAGHDALREHVVPALEQGIDCLVVSVGALSEPGLAERLEAAARRGHAQMQLLSGAIGAIDALAAARVGGLDAVVYTGRKPPRAWKGTPAERQFDLDALDRTTVIFEGKASDAALLFPKNANVAATLALAGLGMERTHVRLLADPTIDENIHHVEARGAFGGFELIMRGKPLAANPKTSALTVFSVVRALGNRAHAVSI.

NAD(+) contacts are provided by Ala125 and Asn191. His221 is a catalytic residue.

Belongs to the L-aspartate dehydrogenase family.

It catalyses the reaction L-aspartate + NADP(+) + H2O = oxaloacetate + NH4(+) + NADPH + H(+). It carries out the reaction L-aspartate + NAD(+) + H2O = oxaloacetate + NH4(+) + NADH + H(+). The protein operates within cofactor biosynthesis; NAD(+) biosynthesis; iminoaspartate from L-aspartate (dehydrogenase route): step 1/1. Its function is as follows. Specifically catalyzes the NAD or NADP-dependent dehydrogenation of L-aspartate to iminoaspartate. The chain is L-aspartate dehydrogenase from Ralstonia nicotianae (strain ATCC BAA-1114 / GMI1000) (Ralstonia solanacearum).